The chain runs to 638 residues: Signal recognition particle receptor subunit alpha (638 aa).

Disordered regions lie at residues 129 to 205 (KIRA…VELS), 218 to 245 (IQKH…KKAP), and 262 to 315 (SAPT…ATKG). Basic and acidic residues-rich tracts occupy residues 137–146 (KKFEDSEKAK) and 153–165 (IETR…EKAK). Ser177 carries the phosphoserine modification. The segment covering 218 to 239 (IQKHGRGLEKSSKSTKSDAPKE) has biased composition (basic and acidic residues). Thr284 bears the Phosphothreonine mark. Ser296, Ser297, and Ser298 each carry phosphoserine. Residues 304–314 (AQNASKPSATK) show a composition bias toward polar residues. Positions 419 to 636 (YVVTFCGVNG…NAKAVVAALM (218 aa)) are NG domain. Position 425–432 (425–432 (GVNGVGKS)) interacts with GTP. Ser473 carries the post-translational modification Phosphoserine. A GTP-binding site is contributed by 520 to 524 (DTAGR). Residue Thr578 is modified to Phosphothreonine. 588 to 591 (TKFD) serves as a coordination point for GTP.

This sequence belongs to the GTP-binding SRP family. Heterodimer with SRPRB. Interacts with the signal recognition particle (SRP) complex subunit SRP54.

The protein localises to the endoplasmic reticulum membrane. In terms of biological role, component of the SRP (signal recognition particle) receptor. Ensures, in conjunction with the signal recognition particle, the correct targeting of the nascent secretory proteins to the endoplasmic reticulum membrane system. Forms a guanosine 5'-triphosphate (GTP)-dependent complex with the SRP subunit SRP54. SRP receptor compaction and GTPase rearrangement drive SRP-mediated cotranslational protein translocation into the ER. The sequence is that of Signal recognition particle receptor subunit alpha from Canis lupus familiaris (Dog).